The following is a 590-amino-acid chain: Aspartate--tRNA(Asp/Asn) ligase (590 aa).

E172 contacts L-aspartate. Residues Q196–K199 are aspartate. L-aspartate is bound at residue R218. Residues R218–E220 and Q227 each bind ATP. H449 serves as a coordination point for L-aspartate. Residue E484 coordinates ATP. Residue R491 coordinates L-aspartate. G536–R539 serves as a coordination point for ATP.

This sequence belongs to the class-II aminoacyl-tRNA synthetase family. Type 1 subfamily. In terms of assembly, homodimer.

The protein resides in the cytoplasm. It carries out the reaction tRNA(Asx) + L-aspartate + ATP = L-aspartyl-tRNA(Asx) + AMP + diphosphate. In terms of biological role, aspartyl-tRNA synthetase with relaxed tRNA specificity since it is able to aspartylate not only its cognate tRNA(Asp) but also tRNA(Asn). Reaction proceeds in two steps: L-aspartate is first activated by ATP to form Asp-AMP and then transferred to the acceptor end of tRNA(Asp/Asn). The sequence is that of Aspartate--tRNA(Asp/Asn) ligase from Francisella tularensis subsp. tularensis (strain WY96-3418).